Here is a 310-residue protein sequence, read N- to C-terminus: Methionyl-tRNA formyltransferase (310 aa).

111 to 114 is a (6S)-5,6,7,8-tetrahydrofolate binding site; the sequence is SLLP.

The protein belongs to the Fmt family.

The catalysed reaction is L-methionyl-tRNA(fMet) + (6R)-10-formyltetrahydrofolate = N-formyl-L-methionyl-tRNA(fMet) + (6S)-5,6,7,8-tetrahydrofolate + H(+). Its function is as follows. Attaches a formyl group to the free amino group of methionyl-tRNA(fMet). The formyl group appears to play a dual role in the initiator identity of N-formylmethionyl-tRNA by promoting its recognition by IF2 and preventing the misappropriation of this tRNA by the elongation apparatus. This is Methionyl-tRNA formyltransferase from Rhodopseudomonas palustris (strain ATCC BAA-98 / CGA009).